We begin with the raw amino-acid sequence, 427 residues long: Tol-Pal system protein TolB (427 aa).

Residues 1 to 23 (MKLLKRLVSVFAIVLAVGSNAFA) form the signal peptide.

Belongs to the TolB family. The Tol-Pal system is composed of five core proteins: the inner membrane proteins TolA, TolQ and TolR, the periplasmic protein TolB and the outer membrane protein Pal. They form a network linking the inner and outer membranes and the peptidoglycan layer.

Its subcellular location is the periplasm. Functionally, part of the Tol-Pal system, which plays a role in outer membrane invagination during cell division and is important for maintaining outer membrane integrity. The chain is Tol-Pal system protein TolB from Haemophilus influenzae (strain PittEE).